Reading from the N-terminus, the 139-residue chain is Nucleoside diphosphate kinase (139 aa).

Positions 10, 58, 86, 92, 103, and 113 each coordinate ATP. H116 (pros-phosphohistidine intermediate) is an active-site residue.

Belongs to the NDK family. Homotetramer. Requires Mg(2+) as cofactor.

It localises to the cytoplasm. It carries out the reaction a 2'-deoxyribonucleoside 5'-diphosphate + ATP = a 2'-deoxyribonucleoside 5'-triphosphate + ADP. It catalyses the reaction a ribonucleoside 5'-diphosphate + ATP = a ribonucleoside 5'-triphosphate + ADP. Its function is as follows. Major role in the synthesis of nucleoside triphosphates other than ATP. The ATP gamma phosphate is transferred to the NDP beta phosphate via a ping-pong mechanism, using a phosphorylated active-site intermediate. This Nitratidesulfovibrio vulgaris (strain ATCC 29579 / DSM 644 / CCUG 34227 / NCIMB 8303 / VKM B-1760 / Hildenborough) (Desulfovibrio vulgaris) protein is Nucleoside diphosphate kinase.